The primary structure comprises 456 residues: Anthranilate synthase component 1 (456 aa).

Residues serine 31 and 244–246 (SYM) each bind L-tryptophan. Residue 279 to 280 (GT) coordinates chorismate. Position 306 (glutamate 306) interacts with Mg(2+). Chorismate-binding positions include tyrosine 394, arginine 414, 428–430 (GAG), and glycine 430. Position 443 (glutamate 443) interacts with Mg(2+).

This sequence belongs to the anthranilate synthase component I family. In terms of assembly, heterotetramer consisting of two non-identical subunits: a beta subunit (TrpG) and a large alpha subunit (TrpE). Requires Mg(2+) as cofactor.

It carries out the reaction chorismate + L-glutamine = anthranilate + pyruvate + L-glutamate + H(+). It participates in amino-acid biosynthesis; L-tryptophan biosynthesis; L-tryptophan from chorismate: step 1/5. Feedback inhibited by tryptophan. Part of a heterotetrameric complex that catalyzes the two-step biosynthesis of anthranilate, an intermediate in the biosynthesis of L-tryptophan. In the first step, the glutamine-binding beta subunit (TrpG) of anthranilate synthase (AS) provides the glutamine amidotransferase activity which generates ammonia as a substrate that, along with chorismate, is used in the second step, catalyzed by the large alpha subunit of AS (TrpE) to produce anthranilate. In the absence of TrpG, TrpE can synthesize anthranilate directly from chorismate and high concentrations of ammonia. The polypeptide is Anthranilate synthase component 1 (trpE) (Lactococcus lactis subsp. lactis (strain IL1403) (Streptococcus lactis)).